An 85-amino-acid chain; its full sequence is Large ribosomal subunit protein bL31B (85 aa).

The protein belongs to the bacterial ribosomal protein bL31 family. Type B subfamily. As to quaternary structure, part of the 50S ribosomal subunit.

The chain is Large ribosomal subunit protein bL31B from Staphylococcus epidermidis (strain ATCC 35984 / DSM 28319 / BCRC 17069 / CCUG 31568 / BM 3577 / RP62A).